The primary structure comprises 317 residues: tRNA dimethylallyltransferase (317 aa).

14 to 21 (GPTAVGKT) lines the ATP pocket. A substrate-binding site is contributed by 16 to 21 (TAVGKT). Residues 39–42 (DSMQ) form an interaction with substrate tRNA region.

Belongs to the IPP transferase family. Monomer. It depends on Mg(2+) as a cofactor.

The enzyme catalyses adenosine(37) in tRNA + dimethylallyl diphosphate = N(6)-dimethylallyladenosine(37) in tRNA + diphosphate. Functionally, catalyzes the transfer of a dimethylallyl group onto the adenine at position 37 in tRNAs that read codons beginning with uridine, leading to the formation of N6-(dimethylallyl)adenosine (i(6)A). The sequence is that of tRNA dimethylallyltransferase from Bacillus cereus (strain AH820).